A 344-amino-acid polypeptide reads, in one-letter code: S-adenosylmethionine:tRNA ribosyltransferase-isomerase (344 aa).

The protein belongs to the QueA family. As to quaternary structure, monomer.

It localises to the cytoplasm. The enzyme catalyses 7-aminomethyl-7-carbaguanosine(34) in tRNA + S-adenosyl-L-methionine = epoxyqueuosine(34) in tRNA + adenine + L-methionine + 2 H(+). It participates in tRNA modification; tRNA-queuosine biosynthesis. Transfers and isomerizes the ribose moiety from AdoMet to the 7-aminomethyl group of 7-deazaguanine (preQ1-tRNA) to give epoxyqueuosine (oQ-tRNA). The protein is S-adenosylmethionine:tRNA ribosyltransferase-isomerase of Nitrosococcus oceani (strain ATCC 19707 / BCRC 17464 / JCM 30415 / NCIMB 11848 / C-107).